The primary structure comprises 148 residues: Large ribosomal subunit protein bL9 (148 aa).

It belongs to the bacterial ribosomal protein bL9 family.

In terms of biological role, binds to the 23S rRNA. The chain is Large ribosomal subunit protein bL9 from Lachnoclostridium phytofermentans (strain ATCC 700394 / DSM 18823 / ISDg) (Clostridium phytofermentans).